The following is a 1738-amino-acid chain: Complement C4-B (1738 aa).

The signal sequence occupies residues 1–19 (MRLLWGLAWVFSFCASSLQ). A disulfide bridge connects residues Cys66 and Cys95. Asn224 carries an N-linked (GlcNAc...) asparagine glycan. Cys633 and Cys667 form a disulfide bridge. A propeptide spanning residues 674–677 (RQKR) is cleaved from the precursor. 3 cysteine pairs are disulfide-bonded: Cys700/Cys726, Cys701/Cys733, and Cys714/Cys734. Positions 700–734 (CCQDGMTKLPMKRTCEQRAARVPQQACREPFLSCC) constitute an Anaphylatoxin-like domain. N-linked (GlcNAc...) asparagine glycosylation is present at Asn743. The segment at residues 1006-1009 (CAEQ) is a cross-link (isoglutamyl cysteine thioester (Cys-Gln)). Asn1324 and Asn1387 each carry an N-linked (GlcNAc...) asparagine glycan. A sulfotyrosine mark is found at Tyr1413, Tyr1416, and Tyr1417. Residues 1444-1447 (RRRR) constitute a propeptide that is removed on maturation. Cystine bridges form between Cys1465–Cys1529, Cys1577–Cys1582, Cys1589–Cys1667, Cys1612–Cys1736, and Cys1712–Cys1721. In terms of domain architecture, NTR spans 1589 to 1736 (CPRLLRSLER…FLMEFSSRGC (148 aa)).

In absence of complement activation, circulates in blood as a disulfide-linked trimer of an alpha, beta and gamma chain. In terms of assembly, complement C4b is composed of complement C4b-A, complement C4 beta and complement C4 gamma chains that are associated via disulfide bonds. Non-enzymatic component of the C3 convertase, also named C4bC2b, composed of the serine protease complement C2b (C2), as well as complement C4b. Non-enzymatic component of the C5 convertase, also named C4bC2bC3b, composed of the serine protease complement C2b (C2), complement C3b, as well as complement C4b. Post-translationally, prior to secretion, the single-chain precursor is enzymatically cleaved by plasminogen (PLG) to yield non-identical chains alpha, beta and gamma. During activation of the complement systems, the alpha chain is cleaved into C4a and C4b by different proteases depending on the complement pathway: C4b stays linked to the beta and gamma chains, while C4a is released in the plasma. The alpha chain is cleaved by C1S to generate C4a and C4b following activation by the classical complement system. The alpha chain is cleaved to generate C4a and C4b by MASP2 following activation by the lectin complement system. The alpha chain is cleaved by GZMK to generate C4a and C4b following activation by the GZMK complement system. Further degradation of C4b by C1 into the inactive fragments C4c and C4d blocks the generation of C3 convertase. The proteolytic cleavages often are incomplete so that many structural forms can be found in plasma. In terms of processing, upon activation, the internal thioester bond reacts with carbohydrate antigens on the target surface to form amide or ester bonds, leading to covalent association with the surface of pathogens. Complement C4b interacts with complement C3b via a thioester linkage.

The protein resides in the secreted. It localises to the cell surface. In terms of biological role, precursor of non-enzymatic components of the classical, lectin and GZMK complement pathways, which consist in a cascade of proteins that leads to phagocytosis and breakdown of pathogens and signaling that strengthens the adaptive immune system. Functionally, non-enzymatic component of C3 and C5 convertases. Generated following cleavage by complement proteases (C1S, MASP2 or GZMK, depending on the complement pathway), it covalently attaches to the surface of pathogens, where it acts as an opsonin that marks the surface of antigens for removal. It then recruits the serine protease complement C2b to form the C3 and C5 convertases, which cleave and activate C3 and C5, respectively, the next components of the complement pathways. Complement C4b-A isotype is responsible for effective binding to form amide bonds with immune aggregates or protein antigens, while complement C4b-B isotype catalyzes the transacylation of the thioester carbonyl group to form ester bonds with carbohydrate antigens. Putative humoral mediator released following cleavage by complement proteases (C1S, MASP2 or GZMK, depending on the complement pathway). While it is strongly similar to anaphylatoxins, its role is unclear. Was reported to act as a mediator of local inflammatory process; however these effects were probably due to contamination with C3a and/C5a anaphylatoxins in biological assays. This is Complement C4-B from Mus musculus (Mouse).